We begin with the raw amino-acid sequence, 144 residues long: Deoxyuridine 5'-triphosphate nucleotidohydrolase (144 aa).

Residues R63–G65, N76, and T80–D82 contribute to the substrate site.

The protein belongs to the dUTPase family. The cofactor is Mg(2+).

It catalyses the reaction dUTP + H2O = dUMP + diphosphate + H(+). Its pathway is pyrimidine metabolism; dUMP biosynthesis; dUMP from dCTP (dUTP route): step 2/2. In terms of biological role, this enzyme is involved in nucleotide metabolism: it produces dUMP, the immediate precursor of thymidine nucleotides and it decreases the intracellular concentration of dUTP so that uracil cannot be incorporated into DNA. This chain is Deoxyuridine 5'-triphosphate nucleotidohydrolase, found in Bacteroides thetaiotaomicron (strain ATCC 29148 / DSM 2079 / JCM 5827 / CCUG 10774 / NCTC 10582 / VPI-5482 / E50).